The primary structure comprises 1383 residues: MAQTLAMTSQFNGRKRVRKFFGKIPEVAEMPNLIEVQKASYDQFLMIEEPKGGRPDEGLQAVFKSVFPISDFSGTAMLEFVGYQFDSPKFDVEECRQRDLTYAAPLKVILRLIVFDVDEDTGSKDIKDIKEQGVYMGDMPLMTTNGTFIVNGTERVIVSQMHRSPGVFFDHDKGKSHSSGKFLFAARVIPYRGSWLDIEFDAKDIIYARIDRRRKIPVTSLLMALGMDASDILSTFYNKVTYERDGDGWRIPYSVDRFKGMKLVSDLIDADSGEVVAEAGKKLTVRAAKALAEKGLKAVKVSEDDLLGSYLAEDIVNYQTGEIYLEAGDEIDEKTLRVLFDVNADQIDILDIDHMNIGAYIRNTLKVDKNESRQDALFDIYRVMRPGEPPTMDTAEAMFHSLFFDPERYDLSAVGRVKMNLRMDLDCPDTVRVLRQEDILAVVKMLVELRDGRGEIDDIDNLGNRRVRSVGELMENQYRIGLLRMERAIKERMSSVEIDTVMPQDLINAKPAAAAVREFFGSSQLSQFMDQTNPLSEITHKRRLSALGPGGLTRERAGFEVRDVHPTHYGRICPIETPEGPNIGLINSLATFARVNKYGFIESPYRKIIDGKVTTEVIYLSAMEESKHYVAQANSSLDAEGRLSEEFVVCRHAGEVLMAPRDHVDLMDVSPKQLVSVAAALIPFLENDDANRALMGSNMQRQAVPLVRAEAPFVGTGMESIVARDSGAAVAARRSGIVDQVDATRIVIRATEDLDPSKSGVDIYRLQKFQRSNQSTCINQRPLVHVGDRVEKGNIIADGPSTDLGDLALGRNVLVAFMPWNGYNYEDSILLSERIVADDVFTSIHIEEFEVAARDTKLGPEEITRDIPNVAEEALRNLDEAGIIYIGAEVQPGDILVGKITPKGESPMTPEEKLLRAIFGEKASDVRDTSMRMPPGAFGTVVEVRVFNRHGVEKDERAMAIEREEIERLAKDRDDEQSILDRNVYARLTDMLVGKVAVEGPKGFSKNKKLDTTIMGHYPRSQWWQFTVEDEKLQNEIEALRNQYDESKEALQRRFMDKVEKVQRGDEMPPGVMKMVKVFVAVKRKIQPGDKMAGRHGNKGVVSRILPIEDMPFLEDGTHADIVLNPLGVPSRMNVGQILETHLGWACAGMGKKIGDLVDLYQETGDILPLRQRIENLMPDDDHNEPVRQYDNESLYKLALQMRKGVSIATPVFDGAHEADINMMLEDAGLDSSGQVTLYDGRTGEPFDRPVTVGYIYMLKLHHLVDDKIHARSIGPYSLVTQQPLGGKAQFGGQRFGEMEVWALEAYGAAYTLQEMLTVKSDDVAGRTKVYEAIVRGDDTFEAGIPESFNVLVKEMRSLALNVELDDARELIAQRALSDTTEQ.

This sequence belongs to the RNA polymerase beta chain family. In terms of assembly, the RNAP catalytic core consists of 2 alpha, 1 beta, 1 beta' and 1 omega subunit. When a sigma factor is associated with the core the holoenzyme is formed, which can initiate transcription.

It catalyses the reaction RNA(n) + a ribonucleoside 5'-triphosphate = RNA(n+1) + diphosphate. In terms of biological role, DNA-dependent RNA polymerase catalyzes the transcription of DNA into RNA using the four ribonucleoside triphosphates as substrates. The chain is DNA-directed RNA polymerase subunit beta from Bartonella henselae (strain ATCC 49882 / DSM 28221 / CCUG 30454 / Houston 1) (Rochalimaea henselae).